We begin with the raw amino-acid sequence, 580 residues long: Putative adenine deaminase YerA (580 aa).

S399 carries the phosphoserine modification.

It belongs to the metallo-dependent hydrolases superfamily. Adenine deaminase family.

The enzyme catalyses adenine + H2O + H(+) = hypoxanthine + NH4(+). The polypeptide is Putative adenine deaminase YerA (yerA) (Bacillus subtilis (strain 168)).